Here is a 288-residue protein sequence, read N- to C-terminus: Centromere protein P (288 aa).

Positions 1 to 71 form a coiled coil; it reads MDAELAEVRA…HLESELSFLS (71 aa). Ser-38 bears the Phosphoserine mark.

This sequence belongs to the CENP-P/CTF19 family. Component of the CENPA-CAD complex, composed of CENPI, CENPK, CENPL, CENPO, CENPP, CENPQ, CENPR and CENPS. The CENPA-CAD complex interacts with the CENPA-NAC complex, at least composed of CENPA, CENPC, CENPH, CENPM, CENPN, CENPT and CENPU.

It is found in the nucleus. Its subcellular location is the chromosome. The protein resides in the centromere. Functionally, component of the CENPA-CAD (nucleosome distal) complex, a complex recruited to centromeres which is involved in assembly of kinetochore proteins, mitotic progression and chromosome segregation. May be involved in incorporation of newly synthesized CENPA into centromeres via its interaction with the CENPA-NAC complex. This Homo sapiens (Human) protein is Centromere protein P (CENPP).